The chain runs to 190 residues: ATP synthase subunit b, chloroplastic (190 aa).

A helical transmembrane segment spans residues 35–55 (LSVVLGVLIFFGKGVCASCLL).

This sequence belongs to the ATPase B chain family. F-type ATPases have 2 components, F(1) - the catalytic core - and F(0) - the membrane proton channel. F(1) has five subunits: alpha(3), beta(3), gamma(1), delta(1), epsilon(1). F(0) has four main subunits: a(1), b(1), b'(1) and c(10-14). The alpha and beta chains form an alternating ring which encloses part of the gamma chain. F(1) is attached to F(0) by a central stalk formed by the gamma and epsilon chains, while a peripheral stalk is formed by the delta, b and b' chains.

The protein resides in the plastid. It localises to the chloroplast thylakoid membrane. Functionally, f(1)F(0) ATP synthase produces ATP from ADP in the presence of a proton or sodium gradient. F-type ATPases consist of two structural domains, F(1) containing the extramembraneous catalytic core and F(0) containing the membrane proton channel, linked together by a central stalk and a peripheral stalk. During catalysis, ATP synthesis in the catalytic domain of F(1) is coupled via a rotary mechanism of the central stalk subunits to proton translocation. Component of the F(0) channel, it forms part of the peripheral stalk, linking F(1) to F(0). The sequence is that of ATP synthase subunit b, chloroplastic from Coffea arabica (Arabian coffee).